A 418-amino-acid polypeptide reads, in one-letter code: uncharacterized protein (418 aa).

10 helical membrane-spanning segments follow: residues 51 to 71, 79 to 99, 110 to 130, 163 to 183, 224 to 244, 258 to 278, 289 to 309, 315 to 335, 356 to 376, and 379 to 399; these read FVMA…GALV, ALVV…PLFA, VTGI…LGAV, FFGP…SVLA, VIFG…LPLV, ALMS…AYVV, PIFL…TLSD, VGVQ…FPLV, ATGI…VVAG, and AAFM…LVAM.

This sequence belongs to the major facilitator superfamily.

It is found in the cell membrane. This is an uncharacterized protein from Mycobacterium tuberculosis (strain CDC 1551 / Oshkosh).